Consider the following 351-residue polypeptide: Cobalt-precorrin-5B C(1)-methyltransferase (351 aa).

This sequence belongs to the CbiD family.

The enzyme catalyses Co-precorrin-5B + S-adenosyl-L-methionine = Co-precorrin-6A + S-adenosyl-L-homocysteine. The protein operates within cofactor biosynthesis; adenosylcobalamin biosynthesis; cob(II)yrinate a,c-diamide from sirohydrochlorin (anaerobic route): step 6/10. Functionally, catalyzes the methylation of C-1 in cobalt-precorrin-5B to form cobalt-precorrin-6A. The polypeptide is Cobalt-precorrin-5B C(1)-methyltransferase (Thermosipho africanus (strain TCF52B)).